Consider the following 1146-residue polypeptide: Probable transport protein MmpL12 (1146 aa).

11 helical membrane-spanning segments follow: residues 25–45 (LIVI…LPTL), 206–226 (VSVL…LVPL), 254–274 (AIVF…VFLI), 298–318 (IGKV…AMVF), 330–350 (AIAV…PAIL), 382–402 (TIHL…TLLI), 826–846 (FIVI…LRAL), 850–870 (IYLI…GTLV), 883–903 (LPGL…MLLI), 928–948 (VITS…GASI), and 949–969 (NTMA…TFLV).

The protein belongs to the resistance-nodulation-cell division (RND) (TC 2.A.6) family. MmpL subfamily.

It localises to the cell membrane. The sequence is that of Probable transport protein MmpL12 (mmpL12) from Mycobacterium tuberculosis (strain CDC 1551 / Oshkosh).